Here is a 942-residue protein sequence, read N- to C-terminus: UvrABC system protein A (942 aa).

Residue 31-38 coordinates ATP; it reads GLSGSGKS. The C4-type zinc finger occupies 253-280; that stretch reads CSECGYSLPELEPRLFSFNNPAGACPTC. ABC transporter domains lie at 310–586 and 606–936; these read WDRR…EASI and YDAN…RFLT. 639-646 contacts ATP; sequence GVSGSGKS. The segment at 739–765 adopts a C4-type zinc-finger fold; it reads CEACQGDGVIKVEMHFLPDVYVPCDHC.

The protein belongs to the ABC transporter superfamily. UvrA family. As to quaternary structure, forms a heterotetramer with UvrB during the search for lesions.

The protein localises to the cytoplasm. Functionally, the UvrABC repair system catalyzes the recognition and processing of DNA lesions. UvrA is an ATPase and a DNA-binding protein. A damage recognition complex composed of 2 UvrA and 2 UvrB subunits scans DNA for abnormalities. When the presence of a lesion has been verified by UvrB, the UvrA molecules dissociate. The chain is UvrABC system protein A from Haemophilus ducreyi (strain 35000HP / ATCC 700724).